A 318-amino-acid polypeptide reads, in one-letter code: MIIVTGGAGFIGSNIVKGLNNLGIDDILVVDNLKNASKHKNLNRIKFRDYIDKEDFNLDYLTSFVNNNKVEAIFHQGACSDTMETDGKYMMKNNYEYTKNILHICLDKKIRLFYASSASVYGNGENGFEEDEKNEYPLNVYAFSKYHFDRYLNKLFKENKVNSQVVGLRYFNVYGPQENHKGRMASVAFHLFNQIKAGERMKIFEGSENFLRDFIHIDDVVSVNNFFFENPNKSGIFNCGTGNAESFVEIAKALKEVYKSASIEYIAFPDALRGKYQKYTQADLKKLRAAGYDKPFMNVNTGVKKYAEVLEKSGGYLM.

NADP(+)-binding positions include 10–11 (FI), 31–32 (DN), Lys38, Lys53, 76–80 (QGACS), and Asn93. Catalysis depends on Tyr141, which acts as the Proton acceptor. Residue Lys145 coordinates NADP(+). Residue Asn172 coordinates substrate. Positions 173 and 181 each coordinate NADP(+). Residue Lys181 is the Proton acceptor of the active site. Substrate is bound by residues Arg183, His190, 204-207 (FEGS), Arg212, and Tyr276.

The protein belongs to the NAD(P)-dependent epimerase/dehydratase family. HldD subfamily. Homopentamer. It depends on NADP(+) as a cofactor.

The enzyme catalyses ADP-D-glycero-beta-D-manno-heptose = ADP-L-glycero-beta-D-manno-heptose. It functions in the pathway nucleotide-sugar biosynthesis; ADP-L-glycero-beta-D-manno-heptose biosynthesis; ADP-L-glycero-beta-D-manno-heptose from D-glycero-beta-D-manno-heptose 7-phosphate: step 4/4. Functionally, catalyzes the interconversion between ADP-D-glycero-beta-D-manno-heptose and ADP-L-glycero-beta-D-manno-heptose via an epimerization at carbon 6 of the heptose. The chain is ADP-L-glycero-D-manno-heptose-6-epimerase from Brachyspira hyodysenteriae (strain ATCC 49526 / WA1).